The sequence spans 201 residues: Cytochrome c oxidase subunit 3 (201 aa).

A run of 4 helical transmembrane segments spans residues 25-45 (VLGLLVFLISESLMFGGLFAA), 65-85 (LFVPTINTLILISSSFVIHYG), 100-120 (WYWITAAMGAVFLGGQVYEYL), and 137-157 (VMTGFHGLHVFIGILLILGVI).

It belongs to the cytochrome c oxidase subunit 3 family.

It is found in the cell membrane. The enzyme catalyses 4 Fe(II)-[cytochrome c] + O2 + 8 H(+)(in) = 4 Fe(III)-[cytochrome c] + 2 H2O + 4 H(+)(out). This is Cytochrome c oxidase subunit 3 (ctaE) from Thermostichus vulcanus (Synechococcus vulcanus).